Reading from the N-terminus, the 692-residue chain is Elongation factor G 2 (692 aa).

The 276-residue stretch at 8–283 (KDVRNIGIMA…GVVNYLPSPL (276 aa)) folds into the tr-type G domain. Residues 17–24 (AHIDAGKT), 81–85 (DTPGH), and 135–138 (NKMD) contribute to the GTP site.

Belongs to the TRAFAC class translation factor GTPase superfamily. Classic translation factor GTPase family. EF-G/EF-2 subfamily.

The protein resides in the cytoplasm. Its function is as follows. Catalyzes the GTP-dependent ribosomal translocation step during translation elongation. During this step, the ribosome changes from the pre-translocational (PRE) to the post-translocational (POST) state as the newly formed A-site-bound peptidyl-tRNA and P-site-bound deacylated tRNA move to the P and E sites, respectively. Catalyzes the coordinated movement of the two tRNA molecules, the mRNA and conformational changes in the ribosome. This chain is Elongation factor G 2, found in Desulfotalea psychrophila (strain LSv54 / DSM 12343).